A 142-amino-acid chain; its full sequence is 3-hydroxyacyl-[acyl-carrier-protein] dehydratase FabZ (142 aa).

H48 is a catalytic residue.

The protein belongs to the thioester dehydratase family. FabZ subfamily.

The protein resides in the cytoplasm. It carries out the reaction a (3R)-hydroxyacyl-[ACP] = a (2E)-enoyl-[ACP] + H2O. In terms of biological role, involved in unsaturated fatty acids biosynthesis. Catalyzes the dehydration of short chain beta-hydroxyacyl-ACPs and long chain saturated and unsaturated beta-hydroxyacyl-ACPs. This is 3-hydroxyacyl-[acyl-carrier-protein] dehydratase FabZ from Ruminiclostridium cellulolyticum (strain ATCC 35319 / DSM 5812 / JCM 6584 / H10) (Clostridium cellulolyticum).